The primary structure comprises 241 residues: 1-(5-phosphoribosyl)-5-[(5-phosphoribosylamino)methylideneamino] imidazole-4-carboxamide isomerase (241 aa).

D10 (proton acceptor) is an active-site residue. The active-site Proton donor is D131.

This sequence belongs to the HisA/HisF family.

It is found in the cytoplasm. The catalysed reaction is 1-(5-phospho-beta-D-ribosyl)-5-[(5-phospho-beta-D-ribosylamino)methylideneamino]imidazole-4-carboxamide = 5-[(5-phospho-1-deoxy-D-ribulos-1-ylimino)methylamino]-1-(5-phospho-beta-D-ribosyl)imidazole-4-carboxamide. It participates in amino-acid biosynthesis; L-histidine biosynthesis; L-histidine from 5-phospho-alpha-D-ribose 1-diphosphate: step 4/9. The protein is 1-(5-phosphoribosyl)-5-[(5-phosphoribosylamino)methylideneamino] imidazole-4-carboxamide isomerase of Bifidobacterium longum (strain DJO10A).